The primary structure comprises 303 residues: MMQNLARDIDAILITGPTASGKSALAVKLAQRHGGVVINADSMQVYGTLKVLTARPDQSEMGGVEHFLYGHIPPGRAYSTGVWLREAEALVARLGKEGRLPVFVGGTGLYFKALTGGLSDMPEIPLETRKRLRTRLTEEGAEALHGELSARDPETAGRVRPSDGQRIVRALEIIEATGRPIGSYQQSRGPVIIDPARAQKIVVLPERPVLHGRIDRRFETMLARGAVEEVRALLALRLPPEMPVMKAIGVPQIAAMLKGEMSEKQVIEAGAAATRQYAKRQMTWFRNQLDETWQRIEDPDALG.

16 to 23 is a binding site for ATP; it reads GPTASGKS. Residue 18-23 coordinates substrate; sequence TASGKS. The tract at residues 41–44 is interaction with substrate tRNA; it reads DSMQ. The interval 141 to 161 is disordered; that stretch reads AEALHGELSARDPETAGRVRP. An interaction with substrate tRNA region spans residues 165 to 169; sequence QRIVR.

It belongs to the IPP transferase family. Monomer. The cofactor is Mg(2+).

It catalyses the reaction adenosine(37) in tRNA + dimethylallyl diphosphate = N(6)-dimethylallyladenosine(37) in tRNA + diphosphate. Catalyzes the transfer of a dimethylallyl group onto the adenine at position 37 in tRNAs that read codons beginning with uridine, leading to the formation of N6-(dimethylallyl)adenosine (i(6)A). The polypeptide is tRNA dimethylallyltransferase (Rhizobium meliloti (strain 1021) (Ensifer meliloti)).